A 264-amino-acid polypeptide reads, in one-letter code: Thymidylate synthase (264 aa).

Residue Arg21 coordinates dUMP. Residue His51 coordinates (6R)-5,10-methylene-5,6,7,8-tetrahydrofolate. 126 to 127 (RR) is a binding site for dUMP. Catalysis depends on Cys146, which acts as the Nucleophile. Residues 166-169 (RSAD), Asn177, and 207-209 (HLY) each bind dUMP. Asp169 contacts (6R)-5,10-methylene-5,6,7,8-tetrahydrofolate. Residue Ala263 coordinates (6R)-5,10-methylene-5,6,7,8-tetrahydrofolate.

The protein belongs to the thymidylate synthase family. Bacterial-type ThyA subfamily. Homodimer.

Its subcellular location is the cytoplasm. The catalysed reaction is dUMP + (6R)-5,10-methylene-5,6,7,8-tetrahydrofolate = 7,8-dihydrofolate + dTMP. The protein operates within pyrimidine metabolism; dTTP biosynthesis. Catalyzes the reductive methylation of 2'-deoxyuridine-5'-monophosphate (dUMP) to 2'-deoxythymidine-5'-monophosphate (dTMP) while utilizing 5,10-methylenetetrahydrofolate (mTHF) as the methyl donor and reductant in the reaction, yielding dihydrofolate (DHF) as a by-product. This enzymatic reaction provides an intracellular de novo source of dTMP, an essential precursor for DNA biosynthesis. The sequence is that of Thymidylate synthase from Rhizobium johnstonii (strain DSM 114642 / LMG 32736 / 3841) (Rhizobium leguminosarum bv. viciae).